A 332-amino-acid polypeptide reads, in one-letter code: Ketol-acid reductoisomerase (NADP(+)) (332 aa).

In terms of domain architecture, KARI N-terminal Rossmann spans 1 to 182 (MATIYRDKDA…GGTRAGVLET (182 aa)). Residues 25-28 (YGNQ), Lys49, Ser51, and 83-86 (DELQ) each bind NADP(+). His108 is a catalytic residue. An NADP(+)-binding site is contributed by Gly134. Positions 183 to 328 (TFAEETETDL…AELRAMMPWL (146 aa)) constitute a KARI C-terminal knotted domain. Asp191, Glu195, Glu227, and Glu231 together coordinate Mg(2+). Ser252 contacts substrate.

Belongs to the ketol-acid reductoisomerase family. It depends on Mg(2+) as a cofactor.

The catalysed reaction is (2R)-2,3-dihydroxy-3-methylbutanoate + NADP(+) = (2S)-2-acetolactate + NADPH + H(+). It carries out the reaction (2R,3R)-2,3-dihydroxy-3-methylpentanoate + NADP(+) = (S)-2-ethyl-2-hydroxy-3-oxobutanoate + NADPH + H(+). The protein operates within amino-acid biosynthesis; L-isoleucine biosynthesis; L-isoleucine from 2-oxobutanoate: step 2/4. It participates in amino-acid biosynthesis; L-valine biosynthesis; L-valine from pyruvate: step 2/4. Its function is as follows. Involved in the biosynthesis of branched-chain amino acids (BCAA). Catalyzes an alkyl-migration followed by a ketol-acid reduction of (S)-2-acetolactate (S2AL) to yield (R)-2,3-dihydroxy-isovalerate. In the isomerase reaction, S2AL is rearranged via a Mg-dependent methyl migration to produce 3-hydroxy-3-methyl-2-ketobutyrate (HMKB). In the reductase reaction, this 2-ketoacid undergoes a metal-dependent reduction by NADPH to yield (R)-2,3-dihydroxy-isovalerate. This Methanothrix thermoacetophila (strain DSM 6194 / JCM 14653 / NBRC 101360 / PT) (Methanosaeta thermophila) protein is Ketol-acid reductoisomerase (NADP(+)).